Reading from the N-terminus, the 285-residue chain is Bifunctional protein FolD (285 aa).

NADP(+)-binding positions include 166 to 168 (GAS), S191, and I232.

Belongs to the tetrahydrofolate dehydrogenase/cyclohydrolase family. Homodimer.

It carries out the reaction (6R)-5,10-methylene-5,6,7,8-tetrahydrofolate + NADP(+) = (6R)-5,10-methenyltetrahydrofolate + NADPH. The enzyme catalyses (6R)-5,10-methenyltetrahydrofolate + H2O = (6R)-10-formyltetrahydrofolate + H(+). Its pathway is one-carbon metabolism; tetrahydrofolate interconversion. Functionally, catalyzes the oxidation of 5,10-methylenetetrahydrofolate to 5,10-methenyltetrahydrofolate and then the hydrolysis of 5,10-methenyltetrahydrofolate to 10-formyltetrahydrofolate. This is Bifunctional protein FolD from Edwardsiella ictaluri (strain 93-146).